Consider the following 505-residue polypeptide: GDP-Man:Man(3)GlcNAc(2)-PP-Dol alpha-1,2-mannosyltransferase (505 aa).

Residues 1 to 4 (MSTM) lie on the Lumenal side of the membrane. Residues 5 to 25 (LWVVVAAVLLFVLPVVRVPML) form a helical membrane-spanning segment. Residues 26-130 (DLTRRNIIRW…KWVDGSTWKH (105 aa)) lie on the Cytoplasmic side of the membrane. An intramembrane region (helical) is located at residues 131 to 151 (LTLVGQAMGSMLLTIEALLRF). The Cytoplasmic portion of the chain corresponds to 152–374 (VPDIWLDTMG…FGINAMWNEH (223 aa)). An intramembrane region (helical) is located at residues 375–395 (FGIAVVEYAAAGLISLVHASA). Residues 396–505 (GPLLDIIVPW…EHKTSRLGSN (110 aa)) are Cytoplasmic-facing.

It belongs to the glycosyltransferase group 1 family.

The protein localises to the endoplasmic reticulum membrane. The enzyme catalyses an alpha-D-Man-(1-&gt;3)-[alpha-D-Man-(1-&gt;6)]-beta-D-Man-(1-&gt;4)-beta-D-GlcNAc-(1-&gt;4)-alpha-D-GlcNAc-diphospho-di-trans,poly-cis-dolichol + 2 GDP-alpha-D-mannose = an alpha-D-Man-(1-&gt;2)-alpha-D-Man-(1-&gt;2)-alpha-D-Man-(1-&gt;3)-[alpha-D-Man-(1-&gt;6)]-beta-D-Man-(1-&gt;4)-beta-D-GlcNAc-(1-&gt;4)-alpha-D-GlcNAc-diphospho-di-trans,poly-cis-dolichol + 2 GDP + 2 H(+). The protein operates within protein modification; protein glycosylation. Its function is as follows. GDP-Man:Man(3)GlcNAc(2)-PP-Dol alpha-1,2-mannosyltransferase that operates in the biosynthetic pathway of dolichol-linked oligosaccharides, the glycan precursors employed in protein asparagine (N)-glycosylation. The assembly of dolichol-linked oligosaccharides begins on the cytosolic side of the endoplasmic reticulum membrane and finishes in its lumen. The sequential addition of sugars to dolichol pyrophosphate produces dolichol-linked oligosaccharides containing fourteen sugars, including two GlcNAcs, nine mannoses and three glucoses. Once assembled, the oligosaccharide is transferred from the lipid to nascent proteins by oligosaccharyltransferases. Catalyzes, on the cytoplasmic face of the endoplasmic reticulum, the addition of the fourth and fifth mannose residues to the dolichol-linked oligosaccharide chain, to produce Man(5)GlcNAc(2)-PP-dolichol core oligosaccharide. The protein is GDP-Man:Man(3)GlcNAc(2)-PP-Dol alpha-1,2-mannosyltransferase (ALG11) of Candida glabrata (strain ATCC 2001 / BCRC 20586 / JCM 3761 / NBRC 0622 / NRRL Y-65 / CBS 138) (Yeast).